Reading from the N-terminus, the 105-residue chain is N(4)-acetylcytidine amidohydrolase (105 aa).

The ASCH domain maps to Thr-7–Glu-93. Lys-21 (proton acceptor) is an active-site residue. Catalysis depends on Thr-24, which acts as the Nucleophile. The Proton donor role is filled by Glu-74.

It belongs to the N(4)-acetylcytidine amidohydrolase family.

The catalysed reaction is N(4)-acetylcytidine + H2O = cytidine + acetate + H(+). The enzyme catalyses N(4)-acetyl-2'-deoxycytidine + H2O = 2'-deoxycytidine + acetate + H(+). It carries out the reaction N(4)-acetylcytosine + H2O = cytosine + acetate + H(+). Its function is as follows. Catalyzes the hydrolysis of N(4)-acetylcytidine (ac4C). The polypeptide is N(4)-acetylcytidine amidohydrolase (Shewanella baltica (strain OS155 / ATCC BAA-1091)).